The sequence spans 163 residues: Aspartate carbamoyltransferase regulatory chain (163 aa).

Zn(2+) is bound by residues Cys113, Cys118, Cys143, and Cys146.

The protein belongs to the PyrI family. In terms of assembly, contains catalytic and regulatory chains. Requires Zn(2+) as cofactor.

Involved in allosteric regulation of aspartate carbamoyltransferase. In Caldivirga maquilingensis (strain ATCC 700844 / DSM 13496 / JCM 10307 / IC-167), this protein is Aspartate carbamoyltransferase regulatory chain.